Here is a 152-residue protein sequence, read N- to C-terminus: Large ribosomal subunit protein uL15 (152 aa).

It belongs to the universal ribosomal protein uL15 family. As to quaternary structure, part of the 50S ribosomal subunit.

In terms of biological role, binds to the 23S rRNA. The sequence is that of Large ribosomal subunit protein uL15 from Staphylothermus marinus (strain ATCC 43588 / DSM 3639 / JCM 9404 / F1).